The primary structure comprises 103 residues: Large ribosomal subunit protein uL24 (103 aa).

It belongs to the universal ribosomal protein uL24 family. Part of the 50S ribosomal subunit.

Its function is as follows. One of two assembly initiator proteins, it binds directly to the 5'-end of the 23S rRNA, where it nucleates assembly of the 50S subunit. One of the proteins that surrounds the polypeptide exit tunnel on the outside of the subunit. The protein is Large ribosomal subunit protein uL24 of Mannheimia succiniciproducens (strain KCTC 0769BP / MBEL55E).